A 293-amino-acid polypeptide reads, in one-letter code: Probable endonuclease 4 (293 aa).

Residues histidine 78, histidine 118, glutamate 154, aspartate 188, histidine 191, histidine 225, aspartate 238, histidine 240, and glutamate 270 each coordinate Zn(2+).

Belongs to the AP endonuclease 2 family. The cofactor is Zn(2+).

It catalyses the reaction Endonucleolytic cleavage to 5'-phosphooligonucleotide end-products.. Its function is as follows. Endonuclease IV plays a role in DNA repair. It cleaves phosphodiester bonds at apurinic or apyrimidinic (AP) sites, generating a 3'-hydroxyl group and a 5'-terminal sugar phosphate. The sequence is that of Probable endonuclease 4 from Vibrio vulnificus (strain YJ016).